A 648-amino-acid polypeptide reads, in one-letter code: Sodium/nucleoside cotransporter 1 (648 aa).

Over 1–83 (MADDTPRQRE…LCREHWQLFE (83 aa)) the chain is Cytoplasmic. A helical transmembrane segment spans residues 84-104 (WISKGLLSTAYIGFLIVACLL). Residues 105 to 108 (DFPR) lie on the Extracellular side of the membrane. A helical membrane pass occupies residues 109–129 (ALALFVITCVVLVFLAYNLLK). Residues 130–147 (RLLGSKLKKCVKFQGHSC) are Cytoplasmic-facing. A helical membrane pass occupies residues 148 to 168 (LSLWLKRGLALAAGLGVILWL). Residues 169–175 (SLDTAQR) are Extracellular-facing. Residues 176 to 196 (PEQLVSFAGICVFLVLLFAGS) traverse the membrane as a helical segment. At 197-201 (KHHRA) the chain is on the cytoplasmic side. A helical transmembrane segment spans residues 202-222 (VSWRAVSWGLGLQFVLGLFVI). Topologically, residues 223–265 (RTEPGFVAFQWLGDQIRVFLSYTEAGSSFVFGEALVKDVFAFQ) are extracellular. A helical membrane pass occupies residues 266 to 286 (VLPIIVFFSCVMSVLYYLGLM). Residues 287–294 (QWVILKIA) lie on the Cytoplasmic side of the membrane. Residues 295–318 (WLMQVTMGTSATETLSVAGNIFVS) form a helical membrane-spanning segment. Over 319 to 339 (QTEAPLLIRPYLADMTLSEVH) the chain is Extracellular. A helical transmembrane segment spans residues 340 to 360 (VVMTGGYATIAGSLLGAYISF). Residue Gly-361 is a topological domain, cytoplasmic. A helical transmembrane segment spans residues 362–380 (IDASSLIAASVMAAPCALA). Topologically, residues 381–427 (LSKLVYPEVEESKFRSEEGVKLTYGDAQNLVEAASAGAAISVKVVAN) are extracellular. The chain crosses the membrane as a helical span at residues 428–448 (IAANLIAFLAVLAFINAALSW). Residues 449 to 470 (LGDMVDIQGLSFQLICSYVLRP) are Cytoplasmic-facing. Residues 471-491 (VAFLMGVAWEDCPVVAELLGI) form a helical membrane-spanning segment. The Extracellular segment spans residues 492-531 (KLFLNEFVAYQELSQYKQRRLAGAEEWLGDKKQWISVRAE). The helical transmembrane segment at 532–552 (ILTTYALCGFANFSSIGIMLG) threads the bilayer. Residues 553-571 (GLTSMVPQRRSDFSQIVLR) are Cytoplasmic-facing. The helical transmembrane segment at 572 to 592 (ALITGAFVSLVNACVAGILYV) threads the bilayer. At 593–648 (PRGVEVDCMSLLNQTVSSSSFEVYLCCRQVFQNTSLEFGQEALHNCCRFYNHTVCT) the chain is on the extracellular side. N-linked (GlcNAc...) asparagine glycans are attached at residues Asn-605, Asn-625, and Asn-643.

This sequence belongs to the concentrative nucleoside transporter (CNT) (TC 2.A.41) family. N-glycosylated. N-glycosylation is required for localization to the plasma membrane and the transporter activity.

It is found in the cell membrane. The protein localises to the apical cell membrane. It catalyses the reaction uridine(out) + Na(+)(out) = uridine(in) + Na(+)(in). The catalysed reaction is thymidine(out) + Na(+)(out) = thymidine(in) + Na(+)(in). It carries out the reaction cytidine(out) + Na(+)(out) = cytidine(in) + Na(+)(in). The enzyme catalyses adenosine(out) + Na(+)(out) = adenosine(in) + Na(+)(in). With respect to regulation, due to its high apparent affinity but slow transport, adenosine could act as a negative regulator of pyrimidine transport under some conditions. Functionally, sodium and pyrimidine nucleoside symporter of the plasma membrane that imports uridine, thymidine and cytidine into cells by coupling their transport to the transmembrane sodium electrochemical gradient. Also transports adenosine, an atypical substrate transported with high apparent affinity, but low maximum velocity. Therefore, exhibits the transport characteristics of the nucleoside transport system cit or N2 subtype (N2/cit). Involved in renal nucleoside (re)absorption. This chain is Sodium/nucleoside cotransporter 1, found in Mus musculus (Mouse).